A 152-amino-acid chain; its full sequence is Nucleoside diphosphate kinase A 1 (152 aa).

6 residues coordinate ATP: lysine 12, phenylalanine 60, arginine 88, threonine 94, arginine 105, and asparagine 115. The active-site Pros-phosphohistidine intermediate is histidine 118.

The protein belongs to the NDK family. As to quaternary structure, homohexamer. Mg(2+) serves as cofactor. The N-terminus is blocked.

It is found in the cytoplasm. The protein localises to the cell membrane. Its subcellular location is the nucleus. It carries out the reaction a 2'-deoxyribonucleoside 5'-diphosphate + ATP = a 2'-deoxyribonucleoside 5'-triphosphate + ADP. The enzyme catalyses a ribonucleoside 5'-diphosphate + ATP = a ribonucleoside 5'-triphosphate + ADP. Its activity is regulated as follows. Autophosphorylation at His-118 increases serine/threonine protein kinase activity of the enzyme. Interaction with the SET complex inhibits exonuclease activity. Functionally, major role in the synthesis of nucleoside triphosphates other than ATP. Possesses nucleoside-diphosphate kinase, serine/threonine-specific protein kinase, geranyl and farnesyl pyrophosphate kinase, histidine protein kinase and 3'-5' exonuclease activities. Involved in cell proliferation, differentiation and development, signal transduction, G protein-coupled receptor endocytosis, and gene expression. Required for neural development including neural patterning and cell fate determination. The polypeptide is Nucleoside diphosphate kinase A 1 (NME1-1) (Bos taurus (Bovine)).